The chain runs to 859 residues: Outer membrane usher protein AfaC (859 aa).

The signal sequence occupies residues 1–28; the sequence is MRDTSSGRMRTGVTGLALAVMVACVMFR.

The protein belongs to the fimbrial export usher family.

Its subcellular location is the cell outer membrane. In terms of biological role, involved in the export and assembly of AFA-III afimbrial adhesin subunits across the outer membrane. The protein is Outer membrane usher protein AfaC (afaC) of Escherichia coli.